We begin with the raw amino-acid sequence, 330 residues long: Probable ADP,ATP carrier protein At5g56450 (330 aa).

Residues 1-10 (MCISKEDEED) are compositionally biased toward acidic residues. The interval 1–22 (MCISKEDEEDPSRNRRNQSPLS) is disordered. Helical transmembrane passes span 27 to 61 (LKHF…LQTQ), 103 to 127 (GSSV…RSIL), 137 to 171 (IFSG…RLAA), 203 to 230 (GLPA…EIFS), 236 to 270 (ELAL…IMMQ), and 300 to 325 (GALS…KRFL). 3 Solcar repeats span residues 28–126 (KHFQ…YRSI), 139–228 (SGAL…VKEI), and 241–324 (KRWG…VKRF). Residues Arg-108 and Lys-120 each coordinate ADP. Residue Arg-264 coordinates ADP. The short motif at 264–269 (RRRIMM) is the Substrate recognition element.

The protein belongs to the mitochondrial carrier (TC 2.A.29) family. Monomer.

The protein resides in the membrane. The enzyme catalyses ADP(in) + ATP(out) = ADP(out) + ATP(in). ADP:ATP antiporter that catalyzes the exchange of ADP and ATP across the membrane. This is Probable ADP,ATP carrier protein At5g56450 from Arabidopsis thaliana (Mouse-ear cress).